A 479-amino-acid chain; its full sequence is Bifunctional protein HldE (479 aa).

Residues 1 to 319 (MTVILPDFLK…NVVQKYEYTK (319 aa)) are ribokinase. 195–198 (NMSE) is an ATP binding site. The active site involves D264. The segment at 346 to 479 (MTNGVFDILH…IDTMEINEIN (134 aa)) is cytidylyltransferase.

This sequence in the N-terminal section; belongs to the carbohydrate kinase PfkB family. The protein in the C-terminal section; belongs to the cytidylyltransferase family. In terms of assembly, homodimer.

It carries out the reaction D-glycero-beta-D-manno-heptose 7-phosphate + ATP = D-glycero-beta-D-manno-heptose 1,7-bisphosphate + ADP + H(+). It catalyses the reaction D-glycero-beta-D-manno-heptose 1-phosphate + ATP + H(+) = ADP-D-glycero-beta-D-manno-heptose + diphosphate. The protein operates within nucleotide-sugar biosynthesis; ADP-L-glycero-beta-D-manno-heptose biosynthesis; ADP-L-glycero-beta-D-manno-heptose from D-glycero-beta-D-manno-heptose 7-phosphate: step 1/4. It participates in nucleotide-sugar biosynthesis; ADP-L-glycero-beta-D-manno-heptose biosynthesis; ADP-L-glycero-beta-D-manno-heptose from D-glycero-beta-D-manno-heptose 7-phosphate: step 3/4. In terms of biological role, catalyzes the phosphorylation of D-glycero-D-manno-heptose 7-phosphate at the C-1 position to selectively form D-glycero-beta-D-manno-heptose-1,7-bisphosphate. Catalyzes the ADP transfer from ATP to D-glycero-beta-D-manno-heptose 1-phosphate, yielding ADP-D-glycero-beta-D-manno-heptose. The chain is Bifunctional protein HldE from Blochmanniella floridana.